The sequence spans 480 residues: Reticulophagy regulator 1 (480 aa).

Basic and acidic residues predominate over residues 1-10 (MASPAPEEHA). The tract at residues 1–41 (MASPAPEEHATQGCPATEEQEPRPGVPGEEAGPEGAGPQVE) is disordered. The Cytoplasmic segment spans residues 1-43 (MASPAPEEHATQGCPATEEQEPRPGVPGEEAGPEGAGPQVEEA). A helical membrane pass occupies residues 44-64 (AGRVAAALTWLLGEPVLWLGW). The Lumenal portion of the chain corresponds to 65 to 78 (RADELLSWKRPLRS). A reticulon homology domain region spans residues 67–216 (DELLSWKRPL…LLFAFLCPLF (150 aa)). Residues 79-99 (LLAFLGANLLFWFLALTPWRV) form a helical membrane-spanning segment. Residues 100-101 (YH) are Cytoplasmic-facing. A helical transmembrane segment spans residues 102-122 (LISVMILGRVIMQIIKDMVLS). Over 123–191 (RARGAQLWRS…LVCSVCTFFT (69 aa)) the chain is Lumenal. Ser-132 carries the phosphoserine modification. Position 134 is a phosphoserine; by CAMK2B (Ser-134). Ser-136 is subject to Phosphoserine. Residues 192 to 212 (ILGSYIPGVILSYLLLLFAFL) traverse the membrane as a helical segment. Topologically, residues 213 to 480 (CPLFKCNDIG…GFLSNLLGGH (268 aa)) are cytoplasmic. Residues 302 to 313 (FNLSEGYTPQTD) are compositionally biased toward polar residues. The tract at residues 302–348 (FNLSEGYTPQTDTSDDLDRPSEEVFSRDLSDFPSLENGAGTNDEDEL) is disordered. Residues 317 to 331 (DLDRPSEEVFSRDLS) are compositionally biased toward basic and acidic residues. Residues 436 to 441 (DDFELL) carry the LIR motif motif. Positions 450-480 (ESELGLTQDQGAEAQQSKKSSGFLSNLLGGH) are disordered. A compositionally biased stretch (polar residues) spans 454 to 473 (GLTQDQGAEAQQSKKSSGFL).

It belongs to the RETREG family. In terms of assembly, homooligomer; oligomerization is enhanced following endoplasmic reticulum stress and is mediated by the reticulon homology domain. Interacts with ATG8 family modifier proteins MAP1LC3A, MAP1LC3B, GABARAP, GABARAPL1 and GABARAPL2. In terms of processing, phosphorylation at Ser-134 by CAMK2B enhances oligomerization and membrane scission and reticulophagy activity.

Its subcellular location is the golgi apparatus. It localises to the cis-Golgi network membrane. It is found in the endoplasmic reticulum membrane. Functionally, endoplasmic reticulum (ER)-anchored autophagy regulator which mediates ER delivery into lysosomes through sequestration into autophagosomes. Promotes membrane remodeling and ER scission via its membrane bending capacity and targets the fragments into autophagosomes via interaction with ATG8 family proteins. Active under basal conditions. Required for collagen quality control in a LIR motif-dependent manner. Required for long-term survival of nociceptive and autonomic ganglion neurons. This chain is Reticulophagy regulator 1, found in Rattus norvegicus (Rat).